The sequence spans 170 residues: Acetyl-CoA decarbonylase/synthase complex subunit epsilon 1 (170 aa).

This sequence belongs to the CdhB family. Heterotetramer of two alpha and two epsilon subunits. The ACDS complex is made up of alpha, epsilon, beta, gamma and delta subunits with a probable stoichiometry of (alpha(2)epsilon(2))(4)-beta(8)-(gamma(1)delta(1))(8).

It participates in one-carbon metabolism; methanogenesis from acetate. Functionally, part of a complex that catalyzes the reversible cleavage of acetyl-CoA, allowing growth on acetate as sole source of carbon and energy. The alpha-epsilon subcomponent functions as a carbon monoxide dehydrogenase. The precise role of the epsilon subunit is unclear; it may have a stabilizing role within the alpha(2)epsilon(2) component and/or be involved in electron transfer to FAD during a potential FAD-mediated CO oxidation. This chain is Acetyl-CoA decarbonylase/synthase complex subunit epsilon 1 (cdhB1), found in Methanosarcina acetivorans (strain ATCC 35395 / DSM 2834 / JCM 12185 / C2A).